We begin with the raw amino-acid sequence, 122 residues long: Pollen allergen Phl p 2 (122 aa).

A signal peptide spans 1-26 (MSMASSSSSSLLAMAVLAALFAGAWC). An Expansin-like CBD domain is found at 41–120 (KHLAVLVKYE…KYTIGATYAP (80 aa)).

Belongs to the expansin family. Expansin B subfamily. In terms of tissue distribution, pollen specific.

The protein resides in the secreted. The chain is Pollen allergen Phl p 2 (PHLPII) from Phleum pratense (Common timothy).